An 84-amino-acid polypeptide reads, in one-letter code: Small ribosomal subunit protein uS17 (84 aa).

Belongs to the universal ribosomal protein uS17 family. As to quaternary structure, part of the 30S ribosomal subunit.

In terms of biological role, one of the primary rRNA binding proteins, it binds specifically to the 5'-end of 16S ribosomal RNA. This Borreliella afzelii (strain PKo) (Borrelia afzelii) protein is Small ribosomal subunit protein uS17.